Here is a 946-residue protein sequence, read N- to C-terminus: Protocadherin alpha-10 (946 aa).

The N-terminal stretch at 1 to 30 (MSCVAMKYCHESWCLLLSLLLFAIWEPGSG) is a signal peptide. 6 Cadherin domains span residues 31–134 (QLRY…PPVF), 135–243 (PTTE…APAF), 244–351 (DRAI…APKI), 352–456 (IVTS…APAF), 457–566 (AQSE…APTL), and 582–679 (VPRS…APKA). Residues 31 to 697 (QLRYSVPEEA…ASESSVVDVN (667 aa)) lie on the Extracellular side of the membrane. Asn258 carries N-linked (GlcNAc...) asparagine glycosylation. N-linked (GlcNAc...) asparagine glycosylation is present at Asn549. A helical transmembrane segment spans residues 698–718 (VYLIIAICAVSSLLVLTLVLY). Topologically, residues 719–946 (TALRCSALPT…GNSTTDNSDQ (228 aa)) are cytoplasmic. PXXP repeat units lie at residues 734 to 737 (PGKP), 774 to 777 (PSVP), 795 to 798 (PRQP), 828 to 831 (PGGP), 869 to 872 (PGNP), and 887 to 890 (PGSP). The interval 734–890 (PGKPMLVCSS…PDKFIIPGSP (157 aa)) is 6 X 4 AA repeats of P-X-X-P. Disordered regions lie at residues 826 to 852 (AGPG…EVSP) and 865 to 946 (FKYG…NSDQ). The span at 905-919 (DKSDFITFGKKEETK) shows a compositional bias: basic and acidic residues.

It localises to the cell membrane. Its function is as follows. Potential calcium-dependent cell-adhesion protein. May be involved in the establishment and maintenance of specific neuronal connections in the brain. This chain is Protocadherin alpha-10, found in Mus musculus (Mouse).